A 364-amino-acid chain; its full sequence is MSKPVNLVLLYGGKSGEHEVSLVSAASVLKHLDSEKYHIIPIAMDKSGRFHRHDYNDLLACSDKLPVVTEKSTPLEGLLINGRLAVDAEIVFPVVHGPLYEDGCLQGLLELAGVAYVGCDVLSSAIGMDKDMARRLACINGLKSARYKLLSWHANASERQQFCHEVASEFGWPLFVKPCSLGSSVGIHKANNMDELNAAVADALRYDEEILVEEFIVGREIELAVLENSIPCGKPRVSMVGEIKVNHPDGYYSYTAKYLESSQTDLIIPAQLNNSLEEQLKQAAANIFSYLKCKGMARVDFFVNDKTEEIYFNEINTLPGFTSISMYPKLWQATGVAYPDLLDELINLAMVHHNCRQHLVTNYL.

Positions 134–347 (RRLACINGLK…YPDLLDELIN (214 aa)) constitute an ATP-grasp domain. 167-222 (ASEFGWPLFVKPCSLGSSVGIHKANNMDELNAAVADALRYDEEILVEEFIVGREIE) provides a ligand contact to ATP. Mg(2+)-binding residues include D300, E314, and N316.

This sequence belongs to the D-alanine--D-alanine ligase family. It depends on Mg(2+) as a cofactor. The cofactor is Mn(2+).

It is found in the cytoplasm. It carries out the reaction 2 D-alanine + ATP = D-alanyl-D-alanine + ADP + phosphate + H(+). The protein operates within cell wall biogenesis; peptidoglycan biosynthesis. In terms of biological role, cell wall formation. The polypeptide is D-alanine--D-alanine ligase (Legionella pneumophila (strain Paris)).